The sequence spans 446 residues: Tubulin beta chain (446 aa).

GTP contacts are provided by glutamine 11, glutamate 69, serine 138, glycine 142, threonine 143, glycine 144, asparagine 204, and asparagine 226. Glutamate 69 contacts Mg(2+). The segment at 422–446 (YQQYQDAGIDEEEEEYEEELPEGEE) is disordered. The span at 429–446 (GIDEEEEEYEEELPEGEE) shows a compositional bias: acidic residues.

Belongs to the tubulin family. Dimer of alpha and beta chains. A typical microtubule is a hollow water-filled tube with an outer diameter of 25 nm and an inner diameter of 15 nM. Alpha-beta heterodimers associate head-to-tail to form protofilaments running lengthwise along the microtubule wall with the beta-tubulin subunit facing the microtubule plus end conferring a structural polarity. Microtubules usually have 13 protofilaments but different protofilament numbers can be found in some organisms and specialized cells. It depends on Mg(2+) as a cofactor.

The protein resides in the cytoplasm. It localises to the cytoskeleton. Its function is as follows. Tubulin is the major constituent of microtubules, a cylinder consisting of laterally associated linear protofilaments composed of alpha- and beta-tubulin heterodimers. Microtubules grow by the addition of GTP-tubulin dimers to the microtubule end, where a stabilizing cap forms. Below the cap, tubulin dimers are in GDP-bound state, owing to GTPase activity of alpha-tubulin. In Gibberella zeae (strain ATCC MYA-4620 / CBS 123657 / FGSC 9075 / NRRL 31084 / PH-1) (Wheat head blight fungus), this protein is Tubulin beta chain (TUB2).